A 419-amino-acid polypeptide reads, in one-letter code: uncharacterized protein (419 aa).

This is an uncharacterized protein from Acinetobacter baylyi (strain ATCC 33305 / BD413 / ADP1).